The following is a 101-amino-acid chain: Chaperone modulatory protein CbpM (101 aa).

This sequence belongs to the CbpM family.

In terms of biological role, interacts with CbpA and inhibits both the DnaJ-like co-chaperone activity and the DNA binding activity of CbpA. Together with CbpA, modulates the activity of the DnaK chaperone system. Does not inhibit the co-chaperone activity of DnaJ. The protein is Chaperone modulatory protein CbpM of Escherichia coli (strain K12 / MC4100 / BW2952).